Reading from the N-terminus, the 331-residue chain is Type II secretion system protein K (331 aa).

A propeptide spans 1–9 (leader sequence); it reads MPSCRRQGG. A helical membrane pass occupies residues 8 to 27; the sequence is GGMALLVVLLILSVMVIIAS. Residues 28–331 lie on the Periplasmic side of the membrane; sequence NMSGRLQLEL…MLRRLNGGAE (304 aa).

The protein belongs to the GSP K family. Type II secretion is composed of four main components: the outer membrane complex, the inner membrane complex, the cytoplasmic secretion ATPase and the periplasm-spanning pseudopilus. Interacts with core component ExeG. In terms of processing, cleaved by prepilin peptidase.

It localises to the cell inner membrane. In terms of biological role, component of the type II secretion system required for the energy-dependent secretion of extracellular factors such as proteases and toxins from the periplasm. Plays a role in pseudopilus assembly and seems to control its length. Interacts with the pseudopilus tip complex that is critical for the recognition and binding of secretion substrates. This Aeromonas hydrophila protein is Type II secretion system protein K (exeK).